Reading from the N-terminus, the 241-residue chain is DnaA regulatory inactivator Hda (241 aa).

It belongs to the DnaA family. HdA subfamily. As to quaternary structure, the active form seems to be an ADP-bound monomer. Forms the RIDA complex (regulatory inactivation of DnaA) of ATP-DnaA, ADP-Hda and the DNA-loaded beta sliding clamp (dnaN).

Its function is as follows. Mediates the interaction of DNA replication initiator protein DnaA with DNA polymerase subunit beta sliding clamp (dnaN). Stimulates hydrolysis of ATP-DnaA to ADP-DnaA, rendering DnaA inactive for reinitiation, a process called regulatory inhibition of DnaA or RIDA. The protein is DnaA regulatory inactivator Hda of Salmonella arizonae (strain ATCC BAA-731 / CDC346-86 / RSK2980).